A 225-amino-acid polypeptide reads, in one-letter code: NAD(P)H-quinone oxidoreductase subunit K, chloroplastic (225 aa).

[4Fe-4S] cluster contacts are provided by Cys-43, Cys-44, Cys-108, and Cys-139.

The protein belongs to the complex I 20 kDa subunit family. In terms of assembly, NDH is composed of at least 16 different subunits, 5 of which are encoded in the nucleus. [4Fe-4S] cluster serves as cofactor.

It is found in the plastid. The protein localises to the chloroplast thylakoid membrane. The enzyme catalyses a plastoquinone + NADH + (n+1) H(+)(in) = a plastoquinol + NAD(+) + n H(+)(out). It carries out the reaction a plastoquinone + NADPH + (n+1) H(+)(in) = a plastoquinol + NADP(+) + n H(+)(out). In terms of biological role, NDH shuttles electrons from NAD(P)H:plastoquinone, via FMN and iron-sulfur (Fe-S) centers, to quinones in the photosynthetic chain and possibly in a chloroplast respiratory chain. The immediate electron acceptor for the enzyme in this species is believed to be plastoquinone. Couples the redox reaction to proton translocation, and thus conserves the redox energy in a proton gradient. This chain is NAD(P)H-quinone oxidoreductase subunit K, chloroplastic, found in Solanum bulbocastanum (Wild potato).